The sequence spans 502 residues: Glycerol kinase (502 aa).

Residue T13 coordinates ADP. 3 residues coordinate ATP: T13, T14, and S15. T13 is a sn-glycerol 3-phosphate binding site. Position 17 (R17) interacts with ADP. Positions 83, 84, 135, and 245 each coordinate sn-glycerol 3-phosphate. Residues R83, E84, Y135, D245, and Q246 each contribute to the glycerol site. Residues T267 and G310 each contribute to the ADP site. Residues T267, G310, Q314, and G411 each contribute to the ATP site. The ADP site is built by G411 and N415.

It belongs to the FGGY kinase family. In terms of assembly, homotetramer and homodimer (in equilibrium).

It catalyses the reaction glycerol + ATP = sn-glycerol 3-phosphate + ADP + H(+). It participates in polyol metabolism; glycerol degradation via glycerol kinase pathway; sn-glycerol 3-phosphate from glycerol: step 1/1. With respect to regulation, activated by phosphorylation and inhibited by fructose 1,6-bisphosphate (FBP). Its function is as follows. Key enzyme in the regulation of glycerol uptake and metabolism. Catalyzes the phosphorylation of glycerol to yield sn-glycerol 3-phosphate. The chain is Glycerol kinase from Lactobacillus delbrueckii subsp. bulgaricus (strain ATCC BAA-365 / Lb-18).